A 59-amino-acid chain; its full sequence is Large ribosomal subunit protein bL32 (59 aa).

Residues 35–59 are disordered; that stretch reads EAHLRHHISPNGYYRGRKVVKTKND. Over residues 49–59 the composition is skewed to basic residues; sequence RGRKVVKTKND.

Belongs to the bacterial ribosomal protein bL32 family.

The polypeptide is Large ribosomal subunit protein bL32 (Polynucleobacter asymbioticus (strain DSM 18221 / CIP 109841 / QLW-P1DMWA-1) (Polynucleobacter necessarius subsp. asymbioticus)).